Here is a 703-residue protein sequence, read N- to C-terminus: DNA ligase (703 aa).

NAD(+) contacts are provided by residues 54–58 (DAEYD), 103–104 (SL), and Glu-132. The active-site N6-AMP-lysine intermediate is the Lys-134. Arg-155, Glu-192, Lys-308, and Lys-332 together coordinate NAD(+). Zn(2+) is bound by residues Cys-426, Cys-429, Cys-444, and Cys-450. The BRCT domain maps to 608–698 (EGPGPLDGVV…ADAARALAVP (91 aa)).

Belongs to the NAD-dependent DNA ligase family. LigA subfamily. The cofactor is Mg(2+). Requires Mn(2+) as cofactor.

The catalysed reaction is NAD(+) + (deoxyribonucleotide)n-3'-hydroxyl + 5'-phospho-(deoxyribonucleotide)m = (deoxyribonucleotide)n+m + AMP + beta-nicotinamide D-nucleotide.. DNA ligase that catalyzes the formation of phosphodiester linkages between 5'-phosphoryl and 3'-hydroxyl groups in double-stranded DNA using NAD as a coenzyme and as the energy source for the reaction. It is essential for DNA replication and repair of damaged DNA. This chain is DNA ligase, found in Parafrankia sp. (strain EAN1pec).